A 442-amino-acid polypeptide reads, in one-letter code: Coiled-coil domain-containing protein 112 (442 aa).

2 coiled-coil regions span residues 23–116 (LEEL…RRIE) and 217–249 (LEEKKKESIQNWKTKKQQKKEEILKLKEKVDTV). 3 disordered regions span residues 245–272 (KVDTVPLPSQSKAEDSPKQREEQRKKQK), 289–312 (KLASQLREEEEKERKQQRERQRQS), and 392–442 (EKVE…RQGI). 2 stretches are compositionally biased toward basic and acidic residues: residues 256–268 (KAEDSPKQREEQR) and 294–310 (LREEEEKERKQQRERQR). Positions 281 to 400 (RKSLEMSAKL…KEKVENNVSR (120 aa)) form a coiled coil.

Its subcellular location is the cytoplasm. It localises to the cytoskeleton. The protein resides in the microtubule organizing center. It is found in the centrosome. The protein localises to the centriolar satellite. The protein is Coiled-coil domain-containing protein 112 (Ccdc112) of Mus musculus (Mouse).